The sequence spans 153 residues: Histone H2B.3 (153 aa).

2 stretches are compositionally biased toward basic and acidic residues: residues 1–10 (MAPKKDEKPA) and 20–54 (AKAEAKPKAEKAGKKAKKEPAKKAAKEPKGDGEKK). The segment at 1-60 (MAPKKDEKPATAEAGAEAPAKAEAKPKAEKAGKKAKKEPAKKAAKEPKGDGEKKDKKKKK) is disordered. N6-acetyllysine is present on residues K41 and K42. A Glycyl lysine isopeptide (Lys-Gly) (interchain with G-Cter in ubiquitin) cross-link involves residue K149.

The protein belongs to the histone H2B family. As to quaternary structure, the nucleosome is a histone octamer containing two molecules each of H2A, H2B, H3 and H4 assembled in one H3-H4 heterotetramer and two H2A-H2B heterodimers. The octamer wraps approximately 147 bp of DNA. Post-translationally, the N-terminus is blocked. Can be acetylated to form H2BK33ac and H2BK34ac. Acetylated mainly on the ubiquitinated form. In terms of processing, monoubiquitinated to form H2BK143ub1; which is increased during the light period and may give a specific tag for epigenetic transcriptional activation.

Its subcellular location is the nucleus. It is found in the chromosome. In terms of biological role, core component of nucleosome. Nucleosomes wrap and compact DNA into chromatin, limiting DNA accessibility to the cellular machineries which require DNA as a template. Histones thereby play a central role in transcription regulation, DNA repair, DNA replication and chromosomal stability. DNA accessibility is regulated via a complex set of post-translational modifications of histones, also called histone code, and nucleosome remodeling. This Chlamydomonas reinhardtii (Chlamydomonas smithii) protein is Histone H2B.3.